Reading from the N-terminus, the 416-residue chain is Histidine--tRNA ligase (416 aa).

It belongs to the class-II aminoacyl-tRNA synthetase family. As to quaternary structure, homodimer.

It localises to the cytoplasm. The catalysed reaction is tRNA(His) + L-histidine + ATP = L-histidyl-tRNA(His) + AMP + diphosphate + H(+). The sequence is that of Histidine--tRNA ligase from Dictyoglomus thermophilum (strain ATCC 35947 / DSM 3960 / H-6-12).